Here is a 135-residue protein sequence, read N- to C-terminus: MSEFKRLMRLKLKMKQKRPEFKRQDWFKCSRIGTSWRRPFGKHSGMRIGLTHRAAVATVGYRGPALVRGLHPSGLQDILVNNVKELVALNPEIQGARIAATVGKRKRIEIVKKANELGIRVFNVSKQKQDEFLSL.

The protein belongs to the eukaryotic ribosomal protein eL32 family.

This Methanococcus maripaludis (strain C5 / ATCC BAA-1333) protein is Large ribosomal subunit protein eL32.